The chain runs to 1068 residues: Cytospin-B (1068 aa).

The interval 1 to 221 is disordered; that stretch reads MRSAAKPWNP…VDGTSVSPGD (221 aa). R2 is lipidated: N-myristoyl glycine. The span at 29–40 shows a compositional bias: low complexity; the sequence is SSGMKSSKSSTS. Phosphoserine is present on residues S38 and S55. A Phosphothreonine modification is found at T78. A phosphoserine mark is found at S112, S131, S134, S137, and S138. The span at 126-144 shows a compositional bias: low complexity; sequence SNPRKSVSSPTSSNTPTPT. At T142 the chain carries Phosphothreonine. Basic and acidic residues predominate over residues 154 to 200; that stretch reads PKQENEGGEKAALESQVRELLAEAKAKDSEINRLRSELKKYKEKRTL. A phosphoserine mark is found at S218 and S241. Composition is skewed to polar residues over residues 261–295, 309–323, and 337–367; these read PNSE…QMSS, LRTS…TKAS, and ETPS…SVSE. The tract at residues 261-367 is disordered; sequence PNSEGAASHT…AGSSPNSVSE (107 aa). Residues S361, S366, S369, and S425 each carry the phosphoserine modification. The stretch at 579 to 773 forms a coiled coil; it reads EVQEMLKVAR…QKELGDVQGH (195 aa). The interval 777–796 is disordered; that stretch reads VTSRAAPPPVDEEPESSEVD. Phosphoserine is present on residues S847 and S863. Disordered regions lie at residues 859–885 and 898–922; these read AAAV…TQRL and GRTE…SRPP. The span at 866–875 shows a compositional bias: polar residues; that stretch reads QRHSTYSSVR. Residues 898 to 909 show a composition bias toward basic and acidic residues; that stretch reads GRTETLKPDPHL. S912 and S914 each carry phosphoserine. Positions 912–922 are enriched in low complexity; it reads SPSLESLSRPP. The 106-residue stretch at 962–1067 folds into the Calponin-homology (CH) domain; that stretch reads GSKRNALLKW…YVAQIYKYFE (106 aa).

This sequence belongs to the cytospin-A family. Highly expressed in testis. Barely detectable in other tissues. Also highly expressed in some cancer cell lines.

It is found in the nucleus. The protein resides in the membrane. The polypeptide is Cytospin-B (SPECC1) (Homo sapiens (Human)).